The chain runs to 749 residues: Cytosolic phospholipase A2 (749 aa).

The interval 1-178 (MSFIDPYQHI…MKKLLGPKNS (178 aa)) is phospholipid binding. S2 is subject to Phosphoserine. The C2 domain maps to 6-122 (PYQHIIVEHQ…KVGEKKEVPF (117 aa)). The Ca(2+) site is built by D40, T41, D43, N65, D93, A94, and N95. The 601-residue stretch at 140 to 740 (SCPDLRFSMA…SNVEARRFFN (601 aa)) folds into the PLA2c domain. The Nucleophile role is filled by S228. The residue at position 268 (T268) is a Phosphothreonine. Residues 409 to 457 (GSQSRGSTMEEELENITTKHIVSNDSSDSDDESHEPKGTENEDAGSDYQ) are disordered. Phosphoserine is present on residues S434, S435, and S437. Phosphoserine; by MAPK is present on S505. Residue S515 is modified to Phosphoserine. K541 participates in a covalent cross-link: Glycyl lysine isopeptide (Lys-Gly) (interchain with G-Cter in SUMO2). D549 functions as the Proton acceptor in the catalytic mechanism. Residue K606 forms a Glycyl lysine isopeptide (Lys-Gly) (interchain with G-Cter in SUMO2) linkage. A phosphoserine mark is found at S727 and S729.

Interacts with KAT5. Post-translationally, phosphorylated at both Ser-505 and Ser-727 in response to mitogenic stimuli.

It localises to the cytoplasm. The protein localises to the golgi apparatus membrane. It is found in the nucleus envelope. The enzyme catalyses a 1,2-diacyl-sn-glycero-3-phosphocholine + H2O = a 1-acyl-sn-glycero-3-phosphocholine + a fatty acid + H(+). It carries out the reaction a 1-O-alkyl-2-acyl-sn-glycero-3-phosphocholine + H2O = a 1-O-alkyl-sn-glycero-3-phosphocholine + a fatty acid + H(+). It catalyses the reaction a 1-acyl-sn-glycero-3-phosphocholine + H2O = sn-glycerol 3-phosphocholine + a fatty acid + H(+). The catalysed reaction is 1-hexadecanoyl-2-(5Z,8Z,11Z,14Z-eicosatetraenoyl)-sn-glycero-3-phosphocholine + H2O = 1-hexadecanoyl-sn-glycero-3-phosphocholine + (5Z,8Z,11Z,14Z)-eicosatetraenoate + H(+). The enzyme catalyses 1,2-di-(5Z,8Z,11Z,14Z-eicosatetraenoyl)-sn-glycero-3-phosphocholine + H2O = 1-(5Z,8Z,11Z,14Z-eicosatetraenoyl)-sn-glycero-3-phosphocholine + (5Z,8Z,11Z,14Z)-eicosatetraenoate + H(+). It carries out the reaction 1-octadecanoyl-2-(5Z,8Z,11Z,14Z-eicosatetraenoyl)-sn-glycero-3-phosphocholine + H2O = 1-octadecanoyl-sn-glycero-3-phosphocholine + (5Z,8Z,11Z,14Z)-eicosatetraenoate + H(+). It catalyses the reaction 1-hexadecanoyl-2-(9Z,12Z-octadecadienoyl)-sn-glycero-3-phosphocholine + H2O = (9Z,12Z)-octadecadienoate + 1-hexadecanoyl-sn-glycero-3-phosphocholine + H(+). The catalysed reaction is 1-octadecanoyl-2-(9Z,12Z,15Z-octadecatrienoyl)-sn-glycero-3-phosphocholine + H2O = (9Z,12Z,15Z)-octadecatrienoate + 1-octadecanoyl-sn-glycero-3-phosphocholine + H(+). The enzyme catalyses 1-(5Z,8Z,11Z,14Z-eicosatetraenoyl)-2-hexadecanoyl-sn-glycero-3-phosphocholine + H2O = 1-(5Z,8Z,11Z,14Z-eicosatetraenoyl)-sn-glycero-3-phosphocholine + hexadecanoate + H(+). It carries out the reaction 1-O-hexadecyl-2-(5Z,8Z,11Z,14Z)-eicosatetraenoyl-sn-glycero-3-phosphocholine + H2O = 1-O-hexadecyl-sn-glycero-3-phosphocholine + (5Z,8Z,11Z,14Z)-eicosatetraenoate + H(+). It catalyses the reaction 1,2-di-(9Z-octadecenoyl)-sn-glycero-3-phospho-(1'-sn-glycerol) + H2O = 1-(9Z-octadecenoyl)-sn-glycero-3-phospho-(1'-sn-glycerol) + (9Z)-octadecenoate + H(+). The catalysed reaction is 1-octadecanoyl-2-(5Z,8Z,11Z,14Z-eicosatetraenoyl)-sn-glycero-3-phosphate + H2O = 1-octadecanoyl-sn-glycero-3-phosphate + (5Z,8Z,11Z,14Z)-eicosatetraenoate + H(+). The enzyme catalyses 1-hexadecanoyl-sn-glycero-3-phosphocholine + H2O = sn-glycerol 3-phosphocholine + hexadecanoate + H(+). It carries out the reaction 2-(prostaglandin E2)-sn-glycero-3-phosphoethanolamine + H2O = sn-glycero-3-phosphoethanolamine + prostaglandin E2 + H(+). It catalyses the reaction 2-[(15S)-hydroxy-(5Z,8Z,11Z,13E)-eicosatetraenoyl]-sn-glycero-3-phosphocholine + H2O = (15S)-hydroxy-(5Z,8Z,11Z,13E)-eicosatetraenoate + sn-glycerol 3-phosphocholine + H(+). The catalysed reaction is 2-[(15R)-hydroxy-(5Z,8Z,11Z,13E)-eicosatetraenoyl]-sn-glycero-3-phosphocholine + H2O = (15R)-hydroxy-(5Z,8Z,11Z,13E)-eicosatetraenoate + sn-glycerol 3-phosphocholine + H(+). The enzyme catalyses 2-(prostaglandin E2)-sn-glycero-3-phosphocholine + H2O = prostaglandin E2 + sn-glycerol 3-phosphocholine + H(+). It carries out the reaction 2-[(11R)-hydroxy-(5Z,8Z,12E,14Z)-eicosatetraenoyl]-sn-glycero-3-phosphocholine + H2O = (11R)-hydroxy-(5Z,8Z,12E,14Z)-eicosatetraenoate + sn-glycerol 3-phosphocholine + H(+). It catalyses the reaction 1-(5Z,8Z,11Z,14Z-eicosatetraenoyl)-2-O-hexadecyl-sn-glycero-3-phosphocholine + H2O = 2-O-hexadecyl-sn-glycero-3-phosphocholine + (5Z,8Z,11Z,14Z)-eicosatetraenoate + H(+). The catalysed reaction is 1-octadecanoyl-2-(5Z,8Z,11Z,14Z-eicosatetraenoyl)-sn-glycero-3-phosphocholine + glycerol = 1-(5Z,8Z,11Z,14Z-eicosatetraenoyl)-glycerol + 1-octadecanoyl-sn-glycero-3-phosphocholine. The enzyme catalyses 1-octadecanoyl-2-(9Z,12Z,15Z-octadecatrienoyl)-sn-glycero-3-phosphocholine + glycerol = 1-(9Z,12Z,15Z-octadecatrienoyl)-glycerol + 1-octadecanoyl-sn-glycero-3-phosphocholine. It participates in membrane lipid metabolism; glycerophospholipid metabolism. Its pathway is lipid metabolism; arachidonate metabolism. It functions in the pathway lipid metabolism; prostaglandin biosynthesis. The protein operates within lipid metabolism; leukotriene B4 biosynthesis. With respect to regulation, activated by cytosolic calcium, which is necessary for binding to membrane lipids. Activated by phosphorylation in response to mitogenic stimuli. Its function is as follows. Has primarily calcium-dependent phospholipase and lysophospholipase activities, with a major role in membrane lipid remodeling and biosynthesis of lipid mediators of the inflammatory response. Plays an important role in embryo implantation and parturition through its ability to trigger prostanoid production. Preferentially hydrolyzes the ester bond of the fatty acyl group attached at sn-2 position of phospholipids (phospholipase A2 activity). Selectively hydrolyzes sn-2 arachidonoyl group from membrane phospholipids, providing the precursor for eicosanoid biosynthesis via the cyclooxygenase pathway. In an alternative pathway of eicosanoid biosynthesis, hydrolyzes sn-2 fatty acyl chain of eicosanoid lysophopholipids to release free bioactive eicosanoids. Hydrolyzes the ester bond of the fatty acyl group attached at sn-1 position of phospholipids (phospholipase A1 activity) only if an ether linkage rather than an ester linkage is present at the sn-2 position. This hydrolysis is not stereospecific. Has calcium-independent phospholipase A2 and lysophospholipase activities in the presence of phosphoinositides. Has O-acyltransferase activity. Catalyzes the transfer of fatty acyl chains from phospholipids to a primary hydroxyl group of glycerol (sn-1 or sn-3), potentially contributing to monoacylglycerol synthesis. In Pongo abelii (Sumatran orangutan), this protein is Cytosolic phospholipase A2 (PLA2G4A).